Reading from the N-terminus, the 387-residue chain is Ferrochelatase (387 aa).

Fe cation contacts are provided by H196 and E277.

This sequence belongs to the ferrochelatase family.

It is found in the cytoplasm. The enzyme catalyses heme b + 2 H(+) = protoporphyrin IX + Fe(2+). The protein operates within porphyrin-containing compound metabolism; protoheme biosynthesis; protoheme from protoporphyrin-IX: step 1/1. Functionally, catalyzes the ferrous insertion into protoporphyrin IX. This is Ferrochelatase from Synechococcus sp. (strain RCC307).